The following is a 206-amino-acid chain: Ribosomal RNA small subunit methyltransferase G (206 aa).

Residues G74, L79, V125–E126, and R140 contribute to the S-adenosyl-L-methionine site.

Belongs to the methyltransferase superfamily. RNA methyltransferase RsmG family.

Its subcellular location is the cytoplasm. It carries out the reaction guanosine(527) in 16S rRNA + S-adenosyl-L-methionine = N(7)-methylguanosine(527) in 16S rRNA + S-adenosyl-L-homocysteine. Specifically methylates the N7 position of guanine in position 527 of 16S rRNA. This Shewanella oneidensis (strain ATCC 700550 / JCM 31522 / CIP 106686 / LMG 19005 / NCIMB 14063 / MR-1) protein is Ribosomal RNA small subunit methyltransferase G.